Reading from the N-terminus, the 70-residue chain is Small ribosomal subunit protein bS21 (70 aa).

The protein belongs to the bacterial ribosomal protein bS21 family.

This is Small ribosomal subunit protein bS21 from Helicobacter hepaticus (strain ATCC 51449 / 3B1).